Reading from the N-terminus, the 245-residue chain is Probable phosphatase YcdX (245 aa).

The Zn(2+) site is built by His-7, His-9, His-15, His-40, Glu-73, His-101, His-131, Asp-192, and His-194.

It belongs to the PHP family. Homotrimer. It depends on Zn(2+) as a cofactor.

The protein is Probable phosphatase YcdX of Escherichia coli O17:K52:H18 (strain UMN026 / ExPEC).